The chain runs to 455 residues: Ribulose bisphosphate carboxylase large chain (455 aa).

K5 carries the post-translational modification N6,N6,N6-trimethyllysine. The substrate site is built by N114 and T164. Catalysis depends on K166, which acts as the Proton acceptor. K168 provides a ligand contact to substrate. Residues K192, D194, and E195 each coordinate Mg(2+). N6-carboxylysine is present on K192. H285 acts as the Proton acceptor in catalysis. Substrate is bound by residues R286, H318, and S370.

The protein belongs to the RuBisCO large chain family. Type I subfamily. As to quaternary structure, heterohexadecamer of 8 large chains and 8 small chains; disulfide-linked. The disulfide link is formed within the large subunit homodimers. It depends on Mg(2+) as a cofactor. Post-translationally, the disulfide bond which can form in the large chain dimeric partners within the hexadecamer appears to be associated with oxidative stress and protein turnover.

It localises to the plastid. It is found in the chloroplast. It carries out the reaction 2 (2R)-3-phosphoglycerate + 2 H(+) = D-ribulose 1,5-bisphosphate + CO2 + H2O. The catalysed reaction is D-ribulose 1,5-bisphosphate + O2 = 2-phosphoglycolate + (2R)-3-phosphoglycerate + 2 H(+). RuBisCO catalyzes two reactions: the carboxylation of D-ribulose 1,5-bisphosphate, the primary event in carbon dioxide fixation, as well as the oxidative fragmentation of the pentose substrate in the photorespiration process. Both reactions occur simultaneously and in competition at the same active site. This Lupinus albus (White lupine) protein is Ribulose bisphosphate carboxylase large chain.